Reading from the N-terminus, the 293-residue chain is tRNA-cytidine(32) 2-sulfurtransferase (293 aa).

Positions 62–67 match the PP-loop motif motif; the sequence is SGGKDS. Residues Cys137, Cys140, and Cys228 each contribute to the [4Fe-4S] cluster site.

It belongs to the TtcA family. As to quaternary structure, homodimer. The cofactor is Mg(2+). [4Fe-4S] cluster is required as a cofactor.

The protein resides in the cytoplasm. It catalyses the reaction cytidine(32) in tRNA + S-sulfanyl-L-cysteinyl-[cysteine desulfurase] + AH2 + ATP = 2-thiocytidine(32) in tRNA + L-cysteinyl-[cysteine desulfurase] + A + AMP + diphosphate + H(+). It participates in tRNA modification. Functionally, catalyzes the ATP-dependent 2-thiolation of cytidine in position 32 of tRNA, to form 2-thiocytidine (s(2)C32). The sulfur atoms are provided by the cysteine/cysteine desulfurase (IscS) system. The protein is tRNA-cytidine(32) 2-sulfurtransferase of Brucella suis (strain ATCC 23445 / NCTC 10510).